We begin with the raw amino-acid sequence, 218 residues long: Small ribosomal subunit protein uS3c (218 aa).

Residues 47-118 (VQKNLKISSG…KLNITITRIA (72 aa)) form the KH type-2 domain.

It belongs to the universal ribosomal protein uS3 family. As to quaternary structure, part of the 30S ribosomal subunit.

The protein resides in the plastid. It is found in the chloroplast. The protein is Small ribosomal subunit protein uS3c (rps3) of Daucus carota (Wild carrot).